We begin with the raw amino-acid sequence, 444 residues long: Vacuolar protein sorting-associated protein 4B (444 aa).

An MIT domain is found at 4–82 (TSPNLQKAID…KEYLKNKEKK (79 aa)). A coiled-coil region spans residues 19–82 (AQEDKAGNYE…KEYLKNKEKK (64 aa)). Basic and acidic residues predominate over residues 78 to 88 (NKEKKAQKPVK). The interval 78–117 (NKEKKAQKPVKEGQPSPADEKGNDSDGEGESDDPEKKKLQ) is disordered. Phosphoserine occurs at positions 93, 102, and 108. Residue 174–181 (GPPGTGKS) participates in ATP binding. The residue at position 410 (Ser-410) is a Phosphoserine.

It belongs to the AAA ATPase family. As to quaternary structure, proposed to be monomeric or homodimeric in nucleotide-free form and to oligomerize upon binding to ATP to form two stacked hexameric or heptameric rings with a central pore through which ESCRT-III substrates are translocated in an ATP-dependent manner. In vitro, associates on the inside of a helical tubular structure formed by a CHMP2A-CHMP3 polymer. Interacts with CHMP1A, CHMP1B, CHMP2A, CHMP4B and CHMP6. Interacts with VPS4A; the interaction suggests a heteromeric assembly with VPS4A. Interacts with VTA1.

It is found in the late endosome membrane. It catalyses the reaction ATP + H2O = ADP + phosphate + H(+). In terms of biological role, involved in late steps of the endosomal multivesicular bodies (MVB) pathway. Recognizes membrane-associated ESCRT-III assemblies and catalyzes their disassembly, possibly in combination with membrane fission. Redistributes the ESCRT-III components to the cytoplasm for further rounds of MVB sorting. MVBs contain intraluminal vesicles (ILVs) that are generated by invagination and scission from the limiting membrane of the endosome and mostly are delivered to lysosomes enabling degradation of membrane proteins, such as stimulated growth factor receptors, lysosomal enzymes and lipids. VPS4A/B are required for the exosomal release of SDCBP, CD63 and syndecan. Functionally, (Microbial infection) In conjunction with the ESCRT machinery also appears to function in topologically equivalent membrane fission events, such as the terminal stages of cytokinesis and enveloped virus budding (lentiviruses). The chain is Vacuolar protein sorting-associated protein 4B (VPS4B) from Pongo abelii (Sumatran orangutan).